Here is a 191-residue protein sequence, read N- to C-terminus: Elongation factor P (191 aa).

An N6-(3,6-diaminohexanoyl)-5-hydroxylysine modification is found at lysine 34.

Belongs to the elongation factor P family. May be beta-lysylated on the epsilon-amino group of Lys-34 by the combined action of EpmA and EpmB, and then hydroxylated on the C5 position of the same residue by EpmC (if this protein is present). Lysylation is critical for the stimulatory effect of EF-P on peptide-bond formation. The lysylation moiety may extend toward the peptidyltransferase center and stabilize the terminal 3-CCA end of the tRNA. Hydroxylation of the C5 position on Lys-34 may allow additional potential stabilizing hydrogen-bond interactions with the P-tRNA.

It localises to the cytoplasm. It functions in the pathway protein biosynthesis; polypeptide chain elongation. Functionally, involved in peptide bond synthesis. Alleviates ribosome stalling that occurs when 3 or more consecutive Pro residues or the sequence PPG is present in a protein, possibly by augmenting the peptidyl transferase activity of the ribosome. Modification of Lys-34 is required for alleviation. The chain is Elongation factor P from Psychrobacter sp. (strain PRwf-1).